The primary structure comprises 214 residues: Ribosomal RNA small subunit methyltransferase G (214 aa).

S-adenosyl-L-methionine contacts are provided by residues glycine 77, leucine 82, valine 128–glutamate 129, and arginine 143.

The protein belongs to the methyltransferase superfamily. RNA methyltransferase RsmG family.

It localises to the cytoplasm. It carries out the reaction guanosine(527) in 16S rRNA + S-adenosyl-L-methionine = N(7)-methylguanosine(527) in 16S rRNA + S-adenosyl-L-homocysteine. In terms of biological role, specifically methylates the N7 position of guanine in position 527 of 16S rRNA. The polypeptide is Ribosomal RNA small subunit methyltransferase G (Nitrosomonas eutropha (strain DSM 101675 / C91 / Nm57)).